The primary structure comprises 187 residues: Small ribosomal subunit protein uS10m (187 aa).

It belongs to the universal ribosomal protein uS10 family. Component of the mitochondrial ribosome small subunit (28S) which comprises a 12S rRNA and about 30 distinct proteins.

The protein localises to the mitochondrion. This chain is Small ribosomal subunit protein uS10m (mrps10), found in Danio rerio (Zebrafish).